The primary structure comprises 97 residues: Large ribosomal subunit protein bL31 (97 aa).

Residues 75–97 form a disordered region; it reads NKTKKSNQAKVEKQTRHRSINEL. The span at 84 to 97 shows a compositional bias: basic and acidic residues; the sequence is KVEKQTRHRSINEL.

The protein belongs to the bacterial ribosomal protein bL31 family. Type A subfamily. Part of the 50S ribosomal subunit.

Its function is as follows. Binds the 23S rRNA. This is Large ribosomal subunit protein bL31 from Mycoplasma genitalium (strain ATCC 33530 / DSM 19775 / NCTC 10195 / G37) (Mycoplasmoides genitalium).